Reading from the N-terminus, the 137-residue chain is Large ribosomal subunit protein uL16 (137 aa).

Belongs to the universal ribosomal protein uL16 family. As to quaternary structure, part of the 50S ribosomal subunit.

Its function is as follows. Binds 23S rRNA and is also seen to make contacts with the A and possibly P site tRNAs. The polypeptide is Large ribosomal subunit protein uL16 (Bradyrhizobium sp. (strain BTAi1 / ATCC BAA-1182)).